The sequence spans 323 residues: MIALGIEGTAWSLSIGVVDEEGVIALENDPYIPKEGGIHPREASQHHSERLPSLLSRVFEKVDKNSIDVVAFSQGPGMGPCLRVVATAARLLAIKLEKPLVGVNHCLAHVEVGRWQTGARKPVSLYVSGGNSQVIARRGNRYRVFGETLDIGIGNALDKLARHMGLKHPGGPKIEELAKKGQKYHFLPYVVKGMDFSFSGMVTAAQRLFDSGVRMEDVAFSFQETAFAMLTEVTERALAYLDLNEVLLVGGVAANKRLQEMLRIMCEDRGAKFYVPPKELAGDNGAMIAYTGLLMYKHGHQTPVEKSYVRPDFRIEDVEVNWD.

Fe cation-binding residues include His-105, His-109, and Tyr-126. Residues 126-130 (YVSGG), Asp-158, Gly-171, Glu-175, and Asn-255 contribute to the substrate site. Asp-283 is a binding site for Fe cation.

It belongs to the KAE1 / TsaD family. As to quaternary structure, monomer. Component of the KEOPS complex that consists of Kae1, Bud32, Cgi121 and Pcc1; the whole complex dimerizes. It depends on Fe(2+) as a cofactor.

Its subcellular location is the cytoplasm. The catalysed reaction is L-threonylcarbamoyladenylate + adenosine(37) in tRNA = N(6)-L-threonylcarbamoyladenosine(37) in tRNA + AMP + H(+). Required for the formation of a threonylcarbamoyl group on adenosine at position 37 (t(6)A37) in tRNAs that read codons beginning with adenine. Is a component of the KEOPS complex that is probably involved in the transfer of the threonylcarbamoyl moiety of threonylcarbamoyl-AMP (TC-AMP) to the N6 group of A37. Kae1 likely plays a direct catalytic role in this reaction, but requires other protein(s) of the complex to fulfill this activity. This Archaeoglobus fulgidus (strain ATCC 49558 / DSM 4304 / JCM 9628 / NBRC 100126 / VC-16) protein is tRNA N6-adenosine threonylcarbamoyltransferase.